A 568-amino-acid chain; its full sequence is Protein phosphatase 1 regulatory inhibitor subunit 16B (568 aa).

Residues 15 to 55 (EKVPTLERLRAAQKRRAQQLKKWAQYEQDLQHRKRKHERKR) adopt a coiled-coil conformation. S69 is subject to Phosphoserine. 4 ANK repeats span residues 100–129 (DGLT…NVNA), 133–162 (ELWT…DLLA), 228–257 (QGAT…RVDV), and 261–290 (DGWE…SLSA). The interval 327–346 (RHKSSLSRRTSSAGSRGKVV) is disordered. S333, S337, and S350 each carry phosphoserine. Residues 333 to 342 (SRRTSSAGSR) are compositionally biased toward low complexity. The interval 373 to 404 (SASEDQRNSTYNGDIRETRTDQENKDPNPRLE) is disordered. Basic and acidic residues predominate over residues 386 to 404 (DIRETRTDQENKDPNPRLE). At S477 the chain carries Phosphoserine. A disordered region spans residues 504–525 (GSGVSRTGEGSSEGKAPLIGGR). Residues 531–560 (SNGTSVYYTVTSGDPPLLKFKAPIEEMEEK) form an ANK 5 repeat. Residue C564 is the site of S-palmitoyl cysteine attachment. At C565 the chain carries Cysteine methyl ester. Residue C565 is the site of S-farnesyl cysteine attachment. Residues 566 to 568 (RIS) constitute a propeptide, removed in mature form.

Interacts with PPP1CA, PPP1CB and MSN. Interacts (via its fourth ankyrin repeat) with the mature dimeric form of RPSA/LAMR1. Interacts with EEF1A1. Interacts with PTEN. Interacts with ECE1. Phosphorylated by PKA and, after PKA priming, by GSK3B. Phosphorylation by GSK3B reduces its association with PP1C and enhances PP1C activity. Dephosphorylation by its associated PP1C results in enhanced association with PP1C, but reduced PP1C activity.

The protein localises to the cell membrane. It localises to the nucleus. Its subcellular location is the cell projection. Its function is as follows. Regulator of protein phosphatase 1 (PP1) that acts as a positive regulator of pulmonary endothelial cell (EC) barrier function. Protects the endothelial barrier from lipopolysaccharide (LPS)-induced vascular leakage. Involved in the regulation of the PI3K/AKT signaling pathway. Involved in the regulation of angiogenesis and endothelial cell proliferation through the control of ECE1 dephosphorylation, trafficking and activity. Involved in the regulation of endothelial cell filopodia extension. May be a downstream target for TGF-beta1 signaling cascade in endothelial cells. Involved in PKA-mediated moesin dephosphorylation which is important in EC barrier protection against thrombin stimulation. Promotes the interaction of PPP1CA with RPSA/LAMR1 and in turn facilitates the dephosphorylation of RPSA/LAMR1. Involved in the dephosphorylation of EEF1A1. This chain is Protein phosphatase 1 regulatory inhibitor subunit 16B (PPP1R16B), found in Bos taurus (Bovine).